Here is a 990-residue protein sequence, read N- to C-terminus: Type III restriction-modification enzyme StyLTI Res subunit (990 aa).

The helicase-like domain stretch occupies residues 50 to 545 (NIDVKMETGT…GLRLPVDENG (496 aa)). One can recognise a VRR-NUC domain in the interval 884–970 (LLKYDYPQQV…RQNINVEFAE (87 aa)). Positions 913-937 (STTPDFVYRIERQDADSVYLLVETK) are endonuclease domain.

This sequence belongs to the type III restriction-modification system Res protein family. As to quaternary structure, contains two different subunits: Res and Mod. It depends on Mg(2+) as a cofactor. S-adenosyl-L-methionine serves as cofactor.

The enzyme catalyses Endonucleolytic cleavage of DNA to give specific double-stranded fragments with terminal 5'-phosphates.. Functionally, a type III restriction enzyme that recognizes 2 inversely oriented double-stranded sequences 5'-CAGAG-3' and cleaves DNA 25-27 base pairs downstream. After binding to one recognition site undergoes random one-dimensional diffusion along DNA until it collides with a stationary enzyme bound to the second DNA site, which is when DNA cleavage occurs. DNA restriction requires both the Res and Mod subunits. This Salmonella typhimurium (strain LT2 / SGSC1412 / ATCC 700720) protein is Type III restriction-modification enzyme StyLTI Res subunit.